Consider the following 513-residue polypeptide: Zinc finger CCCH-type with G patch domain-containing protein (513 aa).

The segment at 155–178 (PCSYYLEGECRFDETKCRFSHGAL) adopts a C3H1-type zinc-finger fold. Positions 252–261 (DQEEDDELSS) are enriched in acidic residues. A disordered region spans residues 252–282 (DQEEDDELSSEESNSSMNNESSDEAESDMDD). The segment covering 262–271 (EESNSSMNNE) has biased composition (low complexity). Positions 272-282 (SSDEAESDMDD) are enriched in acidic residues. The G-patch domain occupies 312–358 (TRGIGSKLMEKMGYIHGTGLGSDGRGIVTPVSAQILPQGRSLDACME). Residues 478 to 495 (VQMQSHKQELATLQAQER) are compositionally biased toward polar residues. Residues 478 to 513 (VQMQSHKQELATLQAQERSLSKEQQTRKSKNKMFEF) are disordered. Residues 496 to 513 (SLSKEQQTRKSKNKMFEF) are compositionally biased toward basic and acidic residues.

It is found in the nucleus. Transcription repressor. In Drosophila erecta (Fruit fly), this protein is Zinc finger CCCH-type with G patch domain-containing protein.